The chain runs to 796 residues: Probable coatomer subunit beta' (796 aa).

6 WD repeats span residues 4–42, 46–84, 88–126, 131–170, 172–214, and 218–256; these read LDFQ…GIWN, QTLV…RVYN, GEKV…KCFN, WKCV…KVWS, GSSV…KVWD, and KACV…KIWH.

The protein belongs to the WD repeat COPB2 family. In terms of assembly, oligomeric complex that consists of at least the alpha, beta, beta', gamma, delta, epsilon and zeta subunits.

It localises to the cytoplasm. The protein resides in the golgi apparatus membrane. The protein localises to the cytoplasmic vesicle. Its subcellular location is the COPI-coated vesicle membrane. In terms of biological role, the coatomer is a cytosolic protein complex that binds to dilysine motifs and reversibly associates with Golgi non-clathrin-coated vesicles, which further mediate biosynthetic protein transport from the ER, via the Golgi up to the trans Golgi network. Coatomer complex is required for budding from Golgi membranes, and is essential for the retrograde Golgi-to-ER transport of dilysine-tagged proteins. In Schizosaccharomyces pombe (strain 972 / ATCC 24843) (Fission yeast), this protein is Probable coatomer subunit beta' (sec27).